A 454-amino-acid polypeptide reads, in one-letter code: 3-phosphoshikimate 1-carboxyvinyltransferase (454 aa).

The tract at residues 1 to 31 (MSENHSEGASRPVISRRPAAGLRADHPVHVP) is disordered. 3-phosphoshikimate-binding residues include Lys-34, Ser-35, and Arg-39. Lys-34 serves as a coordination point for phosphoenolpyruvate. 2 residues coordinate phosphoenolpyruvate: Gly-107 and Arg-135. The 3-phosphoshikimate site is built by Ser-180, Gln-182, Asp-334, and Lys-361. A phosphoenolpyruvate-binding site is contributed by Gln-182. Asp-334 (proton acceptor) is an active-site residue. Phosphoenolpyruvate-binding residues include Arg-365 and Arg-409.

The protein belongs to the EPSP synthase family. Monomer.

It localises to the cytoplasm. The catalysed reaction is 3-phosphoshikimate + phosphoenolpyruvate = 5-O-(1-carboxyvinyl)-3-phosphoshikimate + phosphate. Its pathway is metabolic intermediate biosynthesis; chorismate biosynthesis; chorismate from D-erythrose 4-phosphate and phosphoenolpyruvate: step 6/7. Functionally, catalyzes the transfer of the enolpyruvyl moiety of phosphoenolpyruvate (PEP) to the 5-hydroxyl of shikimate-3-phosphate (S3P) to produce enolpyruvyl shikimate-3-phosphate and inorganic phosphate. In Granulibacter bethesdensis (strain ATCC BAA-1260 / CGDNIH1), this protein is 3-phosphoshikimate 1-carboxyvinyltransferase.